Reading from the N-terminus, the 794-residue chain is Striatin-3 (794 aa).

Met-1 carries the N-acetylmethionine modification. Positions 1–12 (MDELAGGGGGQG) are enriched in gly residues. A disordered region spans residues 1 to 59 (MDELAGGGGGQGMAVPPRPQQGPGGNLSLPPGANGAPGGGGPPAAETAGPPAGPELSRP). The tract at residues 70 to 78 (YIQHEWARF) is caveolin-binding. A coiled-coil region spans residues 76–135 (ARFEMERAHWEVERAELQARIAFLQGERKGQENLKKDLVRRIKMLEYALKQERAKYHKLK). Thr-149 is modified (phosphothreonine). Positions 164-181 (QNSQLTWKQGRQLLRQYL) are calmodulin-binding. Residues Ser-200, Ser-212, Ser-227, Ser-255, and Ser-332 each carry the phosphoserine modification. The disordered stretch occupies residues 309–339 (EDGEGAGEARSSGDGTEWDKDDLSPTAEVWD). WD repeat units lie at residues 475–514 (SHFD…PAKK), 528–567 (AHIG…VDPY), 581–620 (AHTD…PCIC), 676–715 (QSSN…MIHS), 718–757 (AHLD…CVQE), and 764–794 (KLDE…KVFV).

Belongs to the WD repeat striatin family. In terms of assembly, tetramerizes. Part of the core of STRIPAK complexes composed of PP2A catalytic and scaffolding subunits, the striatins (PP2A regulatory subunits), the striatin-associated proteins MOB4, STRIP1 and STRIP2, PDCD10 and members of the STE20 kinases, such as STK24 and STK26. The STRIPAK complex can be extended by adapter proteins such as SLMAP:SIKE1 or CTTNBP2NL. Interacts with CDC42BPB.

It is found in the cytoplasm. The protein localises to the membrane. In terms of biological role, calmodulin-binding scaffolding protein which is the center of the striatin-interacting phosphatase and kinase (STRIPAK) complexes. STRIPAK complexes have critical roles in protein (de)phosphorylation and are regulators of multiple signaling pathways including Hippo, MAPK, nuclear receptor and cytoskeleton remodeling. Different types of STRIPAK complexes are involved in a variety of biological processes such as cell growth, differentiation, apoptosis, metabolism and immune regulation. The chain is Striatin-3 (Strn3) from Rattus norvegicus (Rat).